The following is a 353-amino-acid chain: MTMDNPKVEQAGHAVDSAKLKQLNLAVDALEKQFGKGTIMRMGDGSAGLTVQAISTGSMALDFALGVGGLPRGRVTEIYGPESSGKTTLALHVIAEAQKEGGITAIVDAEHAFDPSYARKLGVDINALLISQPESGEQALSIVETLVRSGAVDVVVVDSVAALVPQAELEGEMGDSSMGLQARLMSQALRKLTGAISKSSTVCIFINQLRDKIGVMYGSPETTTGGKALKFYSSVRLDIRKIAQLKDGDELTGSRTRVKVVKNKVAPPFKMAEFDILYGEGISALGELIDLGVEFGVIKKAGSWFSYGTEKLGQGRESVKKILREDPVLYQKIHMQVKELMTGHTEIISSPTE.

Residue 80-87 coordinates ATP; that stretch reads GPESSGKT.

Belongs to the RecA family.

It is found in the cytoplasm. Functionally, can catalyze the hydrolysis of ATP in the presence of single-stranded DNA, the ATP-dependent uptake of single-stranded DNA by duplex DNA, and the ATP-dependent hybridization of homologous single-stranded DNAs. It interacts with LexA causing its activation and leading to its autocatalytic cleavage. This is Protein RecA from Chlorobium chlorochromatii (strain CaD3).